The sequence spans 436 residues: tRNA-2-methylthio-N(6)-dimethylallyladenosine synthase (436 aa).

The MTTase N-terminal domain maps to 5-121; it reads RKLFIKTYGC…LPDMLERTEG (117 aa). Positions 14, 50, 84, 158, 162, and 165 each coordinate [4Fe-4S] cluster. Residues 144 to 374 enclose the Radical SAM core domain; the sequence is ATRGPAAFLT…TEQQRAAQMA (231 aa). Residues 373–435 form the TRAM domain; it reads MAMVGREVGV…PNSLAGERLG (63 aa).

Belongs to the methylthiotransferase family. MiaB subfamily. Monomer. The cofactor is [4Fe-4S] cluster.

It is found in the cytoplasm. It catalyses the reaction N(6)-dimethylallyladenosine(37) in tRNA + (sulfur carrier)-SH + AH2 + 2 S-adenosyl-L-methionine = 2-methylsulfanyl-N(6)-dimethylallyladenosine(37) in tRNA + (sulfur carrier)-H + 5'-deoxyadenosine + L-methionine + A + S-adenosyl-L-homocysteine + 2 H(+). Functionally, catalyzes the methylthiolation of N6-(dimethylallyl)adenosine (i(6)A), leading to the formation of 2-methylthio-N6-(dimethylallyl)adenosine (ms(2)i(6)A) at position 37 in tRNAs that read codons beginning with uridine. The polypeptide is tRNA-2-methylthio-N(6)-dimethylallyladenosine synthase (Cereibacter sphaeroides (strain ATCC 17023 / DSM 158 / JCM 6121 / CCUG 31486 / LMG 2827 / NBRC 12203 / NCIMB 8253 / ATH 2.4.1.) (Rhodobacter sphaeroides)).